The primary structure comprises 166 residues: NAD(P)H-quinone oxidoreductase subunit I, chloroplastic (166 aa).

4Fe-4S ferredoxin-type domains follow at residues 55–84 and 95–124; these read GRIHFEFDKCIACEVCVRVCPIDLPVVDWK and LNYSIDFGICIFCGNCVEYCPTNCLSMTEE. Residues Cys-64, Cys-67, Cys-70, Cys-74, Cys-104, Cys-107, Cys-110, and Cys-114 each coordinate [4Fe-4S] cluster.

This sequence belongs to the complex I 23 kDa subunit family. As to quaternary structure, NDH is composed of at least 16 different subunits, 5 of which are encoded in the nucleus. Requires [4Fe-4S] cluster as cofactor.

The protein resides in the plastid. Its subcellular location is the chloroplast thylakoid membrane. It catalyses the reaction a plastoquinone + NADH + (n+1) H(+)(in) = a plastoquinol + NAD(+) + n H(+)(out). The catalysed reaction is a plastoquinone + NADPH + (n+1) H(+)(in) = a plastoquinol + NADP(+) + n H(+)(out). Its function is as follows. NDH shuttles electrons from NAD(P)H:plastoquinone, via FMN and iron-sulfur (Fe-S) centers, to quinones in the photosynthetic chain and possibly in a chloroplast respiratory chain. The immediate electron acceptor for the enzyme in this species is believed to be plastoquinone. Couples the redox reaction to proton translocation, and thus conserves the redox energy in a proton gradient. This is NAD(P)H-quinone oxidoreductase subunit I, chloroplastic from Chamaechaenactis scaposa (Fullstem).